We begin with the raw amino-acid sequence, 122 residues long: Small ribosomal subunit protein uS13 (122 aa).

Residues 92–122 (HRKQLPVRGQRTHTNARTRKGKAKPIAGKKK) are disordered.

Belongs to the universal ribosomal protein uS13 family. In terms of assembly, part of the 30S ribosomal subunit. Forms a loose heterodimer with protein S19. Forms two bridges to the 50S subunit in the 70S ribosome.

In terms of biological role, located at the top of the head of the 30S subunit, it contacts several helices of the 16S rRNA. In the 70S ribosome it contacts the 23S rRNA (bridge B1a) and protein L5 of the 50S subunit (bridge B1b), connecting the 2 subunits; these bridges are implicated in subunit movement. Contacts the tRNAs in the A and P-sites. This is Small ribosomal subunit protein uS13 from Methylobacterium radiotolerans (strain ATCC 27329 / DSM 1819 / JCM 2831 / NBRC 15690 / NCIMB 10815 / 0-1).